The chain runs to 216 residues: Probable transaldolase (216 aa).

The active-site Schiff-base intermediate with substrate is the Lys83.

Belongs to the transaldolase family. Type 3B subfamily.

The protein resides in the cytoplasm. The enzyme catalyses D-sedoheptulose 7-phosphate + D-glyceraldehyde 3-phosphate = D-erythrose 4-phosphate + beta-D-fructose 6-phosphate. The protein operates within carbohydrate degradation; pentose phosphate pathway; D-glyceraldehyde 3-phosphate and beta-D-fructose 6-phosphate from D-ribose 5-phosphate and D-xylulose 5-phosphate (non-oxidative stage): step 2/3. Functionally, transaldolase is important for the balance of metabolites in the pentose-phosphate pathway. In Caldanaerobacter subterraneus subsp. tengcongensis (strain DSM 15242 / JCM 11007 / NBRC 100824 / MB4) (Thermoanaerobacter tengcongensis), this protein is Probable transaldolase.